The following is a 444-amino-acid chain: Baeyer-Villiger oxidase ptaJ (444 aa).

Belongs to the questin oxidase family. Requires NADPH as cofactor.

It functions in the pathway secondary metabolite biosynthesis. Functionally, baeyer-Villiger oxidase; part of the gene cluster that mediates the biosynthesis of pestheic acid, a diphenyl ether which is a biosynthetic precursor of the unique chloropupukeananes. The biosynthesis initiates from condensation of acetate and malonate units catalyzed by the non-reducing PKS ptaA. As the ptaA protein is TE/CLC domain-deficient, hydrolysis and Claisen cyclization of the polyketide could be catalyzed by ptaB containing a beta-lactamase domain. The ptaB protein might hydrolyze the thioester bond between the ACP of ptaA and the intermediate to release atrochrysone carboxylic acid, which is spontaneously dehydrated to form endocrocin anthrone. Endocrocin anthrone is then converted to endocrocin, catalyzed by the anthrone oxygenase ptaC. Spontaneous decarboxylation of endocrocin occurs to generate emodin. An O-methyltransferase (ptaH or ptaI) could methylate emodin to form physcion. PtaJ could then catalyze the oxidative cleavage of physcion, and rotation of the intermediate could then afford desmethylisosulochrin. PtaF, a putative NADH-dependent oxidoreductase, might also participate in the oxidative cleavage step. Desmethylisosulochrin is then transformed by another O-methyltransferase (ptaH or ptaI) to form isosulochrin. Chlorination of isosulochrin by ptaM in the cyclohexadienone B ring then produces chloroisosulochrin. PtaE is responsible for the oxidative coupling reactions of both benzophenones isosulouchrin and chloroisosulouchrin to RES-1214-1 and pestheic acid respectively, regardless of chlorination. In Pestalotiopsis fici (strain W106-1 / CGMCC3.15140), this protein is Baeyer-Villiger oxidase ptaJ.